A 177-amino-acid polypeptide reads, in one-letter code: Large ribosomal subunit protein uL6 (177 aa).

The protein belongs to the universal ribosomal protein uL6 family. In terms of assembly, part of the 50S ribosomal subunit.

Functionally, this protein binds to the 23S rRNA, and is important in its secondary structure. It is located near the subunit interface in the base of the L7/L12 stalk, and near the tRNA binding site of the peptidyltransferase center. The polypeptide is Large ribosomal subunit protein uL6 (Colwellia psychrerythraea (strain 34H / ATCC BAA-681) (Vibrio psychroerythus)).